The chain runs to 543 residues: Aspartate/alanine antiporter (543 aa).

Helical transmembrane passes span 4-26, 33-55, 88-110, 117-139, 159-178, 362-381, 385-407, 428-450, 455-477, and 520-542; these read IGNFLVGTPVFTIFICLALGYLL, SFTLGATVGVLIVALLIGQLGVF, FGAKIVYATLIFLVSAFIVAYAC, GPGIAAGIIAGGLTQSAVIGSSL, IPIVYTLTYVFGTIGVLIFL, IINYSWFALGIALSAALGIV, VSGVPIALGGGTASLIVGLVQSI, SIGLNLFIATVGLSAAKTFISAI, ISVLLIGAVISILPHIITFVICY, and VAPAYAIGNIFLTLMGPIFIVLL.

The protein belongs to the AAE transporter (TC 2.A.81) family.

It is found in the cell membrane. In terms of biological role, catalyzes the electrogenic exchange of aspartate with alanine. The polypeptide is Aspartate/alanine antiporter (aspT) (Tetragenococcus halophilus (Pediococcus halophilus)).